The following is a 225-amino-acid chain: Flagellar transcriptional regulator FlhC (225 aa).

Residues Cys-149, Cys-152, Cys-169, and Cys-172 each contribute to the Zn(2+) site.

It belongs to the FlhC family. In terms of assembly, heterohexamer composed of two FlhC and four FlhD subunits. Each FlhC binds a FlhD dimer, forming a heterotrimer, and a hexamer assembles by dimerization of two heterotrimers. Requires Zn(2+) as cofactor.

It is found in the cytoplasm. In terms of biological role, functions in complex with FlhD as a master transcriptional regulator that regulates transcription of several flagellar and non-flagellar operons by binding to their promoter region. Activates expression of class 2 flagellar genes, including fliA, which is a flagellum-specific sigma factor that turns on the class 3 genes. Also regulates genes whose products function in a variety of physiological pathways. In Burkholderia lata (strain ATCC 17760 / DSM 23089 / LMG 22485 / NCIMB 9086 / R18194 / 383), this protein is Flagellar transcriptional regulator FlhC.